The following is a 158-amino-acid chain: NAD(P)H-quinone oxidoreductase subunit N (158 aa).

This sequence belongs to the complex I NdhN subunit family. As to quaternary structure, NDH-1 can be composed of about 15 different subunits; different subcomplexes with different compositions have been identified which probably have different functions.

The protein localises to the cellular thylakoid membrane. It carries out the reaction a plastoquinone + NADH + (n+1) H(+)(in) = a plastoquinol + NAD(+) + n H(+)(out). The catalysed reaction is a plastoquinone + NADPH + (n+1) H(+)(in) = a plastoquinol + NADP(+) + n H(+)(out). In terms of biological role, NDH-1 shuttles electrons from an unknown electron donor, via FMN and iron-sulfur (Fe-S) centers, to quinones in the respiratory and/or the photosynthetic chain. The immediate electron acceptor for the enzyme in this species is believed to be plastoquinone. Couples the redox reaction to proton translocation, and thus conserves the redox energy in a proton gradient. Cyanobacterial NDH-1 also plays a role in inorganic carbon-concentration. The sequence is that of NAD(P)H-quinone oxidoreductase subunit N from Trichodesmium erythraeum (strain IMS101).